A 231-amino-acid polypeptide reads, in one-letter code: mRNA-decapping enzyme subunit 1 (231 aa).

A disordered region spans residues 92 to 120 (QNGSNNIQVNNGSDNSNRNSSGNGNSYKS). Low complexity predominate over residues 101 to 120 (NNGSDNSNRNSSGNGNSYKS).

It belongs to the DCP1 family. Component of the decapping complex composed of DCP1 and DCP2. Interacts with mRNAs, DHH1, LSM1, LSM2, LSM3, LSM4, LSM5, LSM6, LSM7, and the cap-binding proteins PAB1 and TIF4632/eIF-4G. Phosphorylated.

It is found in the cytoplasm. Its subcellular location is the P-body. Component of the decapping complex necessary for the degradation of mRNAs, both in normal mRNA turnover and in nonsense-mediated mRNA decay. Removes the 7-methyl guanine cap structure from mRNA molecules, yielding a 5'-phosphorylated mRNA fragment and 7m-GDP. Decapping is the major pathway of mRNA degradation in yeast. It occurs through deadenylation, decapping and subsequent 5' to 3' exonucleolytic decay of the transcript body. DCP1 is activated by the DEAD-box helicase DHH1 and destabilizes the eIF-4F cap-binding complex from the mRNA. The chain is mRNA-decapping enzyme subunit 1 (DCP1) from Saccharomyces cerevisiae (strain ATCC 204508 / S288c) (Baker's yeast).